The primary structure comprises 265 residues: Speedy protein E13 (265 aa).

The tract at residues 1–80 (MGQILGKIMM…EPEKELAPEP (80 aa)) is disordered. Residues 66–80 (DESDDEPEKELAPEP) are compositionally biased toward acidic residues.

This sequence belongs to the Speedy/Ringo family.

The protein is Speedy protein E13 of Homo sapiens (Human).